Here is a 256-residue protein sequence, read N- to C-terminus: Glucanase inhibitor protein 2 (256 aa).

The signal sequence occupies residues Met-1 to Gly-15. The region spanning Ile-27 to Lys-254 is the Peptidase S1 domain. A disulfide bridge connects residues Cys-54 and Cys-70. N-linked (GlcNAc...) asparagine glycans are attached at residues Asn-87, Asn-102, Asn-107, and Asn-157. 2 cysteine pairs are disulfide-bonded: Cys-177-Cys-189 and Cys-199-Cys-230.

It belongs to the peptidase S1 family. As to quaternary structure, forms an apoplastic complex with host endoglucanases in tomato leaves during P.infestans infection.

It is found in the secreted. Its function is as follows. Secreted effector that suppresses host plant glucan elicitor-mediated defense responses. Targets host endoglucanases and inhibits the endoglucanase-mediated release of elicitor-active glucan oligosaccharides from P.infestans cell walls. This chain is Glucanase inhibitor protein 2, found in Phytophthora infestans (Potato late blight agent).